Reading from the N-terminus, the 123-residue chain is Large ribosomal subunit protein bL12 (123 aa).

Belongs to the bacterial ribosomal protein bL12 family. As to quaternary structure, homodimer. Part of the ribosomal stalk of the 50S ribosomal subunit. Forms a multimeric L10(L12)X complex, where L10 forms an elongated spine to which 2 to 4 L12 dimers bind in a sequential fashion. Binds GTP-bound translation factors.

Forms part of the ribosomal stalk which helps the ribosome interact with GTP-bound translation factors. Is thus essential for accurate translation. This chain is Large ribosomal subunit protein bL12, found in Finegoldia magna (strain ATCC 29328 / DSM 20472 / WAL 2508) (Peptostreptococcus magnus).